We begin with the raw amino-acid sequence, 104 residues long: Integration host factor subunit alpha (104 aa).

It belongs to the bacterial histone-like protein family. As to quaternary structure, heterodimer of an alpha and a beta chain.

In terms of biological role, this protein is one of the two subunits of integration host factor, a specific DNA-binding protein that functions in genetic recombination as well as in transcriptional and translational control. In Methylobacterium sp. (strain 4-46), this protein is Integration host factor subunit alpha.